The following is a 325-amino-acid chain: Elongation factor P--(R)-beta-lysine ligase (325 aa).

76 to 78 (SPE) contributes to the substrate binding site. ATP is bound by residues 100-102 (RNE) and Asn109. A substrate-binding site is contributed by Tyr118. 244–245 (EL) contributes to the ATP binding site. Glu251 provides a ligand contact to substrate. Gly300 is an ATP binding site.

Belongs to the class-II aminoacyl-tRNA synthetase family. EpmA subfamily. As to quaternary structure, homodimer.

It catalyses the reaction D-beta-lysine + L-lysyl-[protein] + ATP = N(6)-((3R)-3,6-diaminohexanoyl)-L-lysyl-[protein] + AMP + diphosphate + H(+). Its function is as follows. With EpmB is involved in the beta-lysylation step of the post-translational modification of translation elongation factor P (EF-P). Catalyzes the ATP-dependent activation of (R)-beta-lysine produced by EpmB, forming a lysyl-adenylate, from which the beta-lysyl moiety is then transferred to the epsilon-amino group of a conserved specific lysine residue in EF-P. This is Elongation factor P--(R)-beta-lysine ligase from Yersinia pseudotuberculosis serotype O:1b (strain IP 31758).